The chain runs to 108 residues: Thioredoxin C-2 (108 aa).

Residues 2–108 enclose the Thioredoxin domain; it reads SATIVNTTDE…KLAAFIDQNI (107 aa). A disulfide bridge connects residues Cys-33 and Cys-36.

Belongs to the thioredoxin family.

Its function is as follows. Participates in various redox reactions through the reversible oxidation of its active center dithiol to a disulfide and catalyzes dithiol-disulfide exchange reactions. The chain is Thioredoxin C-2 from Corynebacterium nephridii.